A 227-amino-acid chain; its full sequence is NADH-quinone oxidoreductase subunit C (227 aa).

This sequence belongs to the complex I 30 kDa subunit family. As to quaternary structure, NDH-1 is composed of 14 different subunits. Subunits NuoB, C, D, E, F, and G constitute the peripheral sector of the complex.

Its subcellular location is the cell inner membrane. The enzyme catalyses a quinone + NADH + 5 H(+)(in) = a quinol + NAD(+) + 4 H(+)(out). Functionally, NDH-1 shuttles electrons from NADH, via FMN and iron-sulfur (Fe-S) centers, to quinones in the respiratory chain. The immediate electron acceptor for the enzyme in this species is believed to be ubiquinone. Couples the redox reaction to proton translocation (for every two electrons transferred, four hydrogen ions are translocated across the cytoplasmic membrane), and thus conserves the redox energy in a proton gradient. The sequence is that of NADH-quinone oxidoreductase subunit C from Coxiella burnetii (strain Dugway 5J108-111).